The following is a 469-amino-acid chain: Gamma-aminobutyric acid permease (469 aa).

The Cytoplasmic portion of the chain corresponds to 1 to 17; sequence MNQSQSGLKKELKTRHM. Residues 18 to 38 form a helical membrane-spanning segment; that stretch reads TMISIAGVIGAGLFVGSGSVI. A topological domain (extracellular) is located at residue H39. A helical membrane pass occupies residues 40-60; the sequence is STGPGAVVSYALAGLLVIFIM. At 61–94 the chain is on the cytoplasmic side; sequence RMLGEMSAVNPTSGSFSQYAHDAIGPWAGFTIGW. The chain crosses the membrane as a helical span at residues 95–115; the sequence is LYWFFWVIVIAIEAIAGAGII. A topological domain (extracellular) is located at residue Q116. A helical transmembrane segment spans residues 117–137; the sequence is YWFHDIPLWLTSLILTIVLTL. Topologically, residues 138–157 are cytoplasmic; sequence TNVYSVKSFGEFEYWFSLIK. A helical membrane pass occupies residues 158 to 178; the sequence is VVTIIAFLIVGFAFIFGFAPG. The Extracellular portion of the chain corresponds to 179 to 200; it reads SEPVGFSNLTGKGGFFPEGISS. Residues 201–221 form a helical membrane-spanning segment; that stretch reads VLLGIVVVIFSFMGTEIVAIA. Over 222 to 242 the chain is Cytoplasmic; sequence AGETSNPIESVTKATRSVVWR. The chain crosses the membrane as a helical span at residues 243–263; the sequence is IIVFYVGSIAIVVALLPWNSA. Residues 264–269 lie on the Extracellular side of the membrane; that stretch reads NILESP. Residues 270–290 traverse the membrane as a helical segment; it reads FVAVLEHIGVPAAAQIMNFIV. Residues 291–328 are Cytoplasmic-facing; it reads LTAVLSCLNSGLYTTSRMLYSLAERNEAPRRFMKLSKK. Residues 329 to 349 traverse the membrane as a helical segment; sequence GVPVQAIVAGTFFSYIAVVMN. Topologically, residues 350 to 355 are extracellular; the sequence is YFSPDT. Residues 356–376 form a helical membrane-spanning segment; that stretch reads VFLFLVNSSGAIALLVYLVIA. Topologically, residues 377-401 are cytoplasmic; the sequence is VSQLKMRKKLEKTNPEALKIKMWLF. Residues 402–422 traverse the membrane as a helical segment; it reads PFLTYLTIIAICGILVSMAFI. Residues 423–425 lie on the Extracellular side of the membrane; sequence DSM. A helical membrane pass occupies residues 426-446; the sequence is RDELLLTGVITGIVLISYLVF. The Cytoplasmic portion of the chain corresponds to 447 to 469; the sequence is RKRKVSEKAAANPVTQQQPDILP.

It belongs to the amino acid-polyamine-organocation (APC) superfamily. Amino acid transporter (AAT) (TC 2.A.3.1) family.

It is found in the cell membrane. It carries out the reaction 4-aminobutanoate(in) + H(+)(in) = 4-aminobutanoate(out) + H(+)(out). The enzyme catalyses beta-alanine(in) + H(+)(in) = beta-alanine(out) + H(+)(out). The protein operates within amino-acid degradation; 4-aminobutanoate degradation. Functionally, transporter for gamma-aminobutyrate (GABA). Can also transport beta-alanine. Can translocate several open-chain GABA analogs (3-aminobutyrate, 3-aminopropanoate, cis-4-aminobutenoate) across the membrane via counterflow against GABA, but cannot transport muscimol. Also functions as a low-affinity proline importer. The sequence is that of Gamma-aminobutyric acid permease from Bacillus subtilis (strain 168).